The primary structure comprises 190 residues: Transcription termination/antitermination protein NusG (190 aa).

In terms of domain architecture, KOW spans V138–L166.

It belongs to the NusG family.

Participates in transcription elongation, termination and antitermination. The chain is Transcription termination/antitermination protein NusG from Rickettsia bellii (strain RML369-C).